A 159-amino-acid polypeptide reads, in one-letter code: Endoribonuclease YbeY (159 aa).

Residues His-119, His-123, and His-129 each contribute to the Zn(2+) site.

Belongs to the endoribonuclease YbeY family. The cofactor is Zn(2+).

It is found in the cytoplasm. Single strand-specific metallo-endoribonuclease involved in late-stage 70S ribosome quality control and in maturation of the 3' terminus of the 16S rRNA. The protein is Endoribonuclease YbeY of Acinetobacter baylyi (strain ATCC 33305 / BD413 / ADP1).